We begin with the raw amino-acid sequence, 447 residues long: Cysteine--tRNA ligase (447 aa).

Position 28 (Cys28) interacts with Zn(2+). A 'HIGH' region motif is present at residues 30–40; that stretch reads PTVYNYIHVGN. Residues Cys211, His236, and Glu240 each contribute to the Zn(2+) site. Residues 268 to 272 carry the 'KMSKS' region motif; it reads KMSKS. An ATP-binding site is contributed by Lys271.

Belongs to the class-I aminoacyl-tRNA synthetase family. In terms of assembly, monomer. The cofactor is Zn(2+).

Its subcellular location is the cytoplasm. The catalysed reaction is tRNA(Cys) + L-cysteine + ATP = L-cysteinyl-tRNA(Cys) + AMP + diphosphate. This chain is Cysteine--tRNA ligase, found in Streptococcus pneumoniae (strain ATCC BAA-255 / R6).